Here is a 511-residue protein sequence, read N- to C-terminus: Lysine--tRNA ligase (511 aa).

The interval 1–20 (MQKNTSQPTNTNEQSNQPSL) is disordered. Positions 422 and 429 each coordinate Mg(2+).

The protein belongs to the class-II aminoacyl-tRNA synthetase family. In terms of assembly, homodimer. Requires Mg(2+) as cofactor.

It is found in the cytoplasm. The enzyme catalyses tRNA(Lys) + L-lysine + ATP = L-lysyl-tRNA(Lys) + AMP + diphosphate. This chain is Lysine--tRNA ligase, found in Chlorobium chlorochromatii (strain CaD3).